A 347-amino-acid polypeptide reads, in one-letter code: MVVLKQEEVPECLRYLPRNYNFETGKVLRTIRRLGAKRVTLQFPDGLLRYSFVIMDVIEKYTGAECILLNDVVYGGCCIDDESIASDLLVHYGHSCLVPVGEMSTKVLYIFVDIRIDIDHAAEMIRRNFQGKIGVIGTIQFNSSINRLKRVLDEERGGVECTLPQIRPLSSGEVLGCTAPKIEGVSAVISIGDGRFHLEGAMIRNPHLRFYKYCPFSRRMTQESYDHSTMLSDRKSEIRKAFSGRSFGVILGSLGRQGNRSILRSVVDRLKEYDVYLIMLDEISPKKLERYNFIDSFVQISCPRLSIDWGKLFKKPLLTPFEVFYSGGEYLMDYYSREGSGEWKNYR.

[4Fe-4S] cluster contacts are provided by cysteine 77, cysteine 177, and cysteine 302.

Belongs to the DPH1/DPH2 family. DPH1 subfamily. In terms of assembly, component of the 2-(3-amino-3-carboxypropyl)histidine synthase complex composed of DPH1, DPH2, DPH3 and a NADH-dependent reductase, predominantly CBR1. Requires [4Fe-4S] cluster as cofactor.

The protein localises to the cytoplasm. The enzyme catalyses L-histidyl-[translation elongation factor 2] + S-adenosyl-L-methionine = 2-[(3S)-amino-3-carboxypropyl]-L-histidyl-[translation elongation factor 2] + S-methyl-5'-thioadenosine + H(+). The protein operates within protein modification; peptidyl-diphthamide biosynthesis. Functionally, catalyzes the first step of diphthamide biosynthesis, a post-translational modification of histidine which occurs in elongation factor 2. DPH1 and DPH2 transfer a 3-amino-3-carboxypropyl (ACP) group from S-adenosyl-L-methionine (SAM) to a histidine residue, the reaction is assisted by a reduction system comprising DPH3 and a NADH-dependent reductase, predominantly CBR1. The chain is 2-(3-amino-3-carboxypropyl)histidine synthase subunit 1 (DPH1) from Encephalitozoon cuniculi (strain GB-M1) (Microsporidian parasite).